A 403-amino-acid chain; its full sequence is S-adenosylmethionine synthase (403 aa).

H15 contributes to the ATP binding site. D17 provides a ligand contact to Mg(2+). E43 provides a ligand contact to K(+). Positions 56 and 99 each coordinate L-methionine. A flexible loop region spans residues 99-109; that stretch reads QSPHIAQGVDR. ATP is bound by residues 166–168, 232–233, D241, 247–248, A264, and K268; these read DAK, KF, and RK. D241 contributes to the L-methionine binding site. K272 provides a ligand contact to L-methionine.

It belongs to the AdoMet synthase family. Homotetramer; dimer of dimers. Requires Mg(2+) as cofactor. It depends on K(+) as a cofactor.

It localises to the cytoplasm. It carries out the reaction L-methionine + ATP + H2O = S-adenosyl-L-methionine + phosphate + diphosphate. It functions in the pathway amino-acid biosynthesis; S-adenosyl-L-methionine biosynthesis; S-adenosyl-L-methionine from L-methionine: step 1/1. Functionally, catalyzes the formation of S-adenosylmethionine (AdoMet) from methionine and ATP. The overall synthetic reaction is composed of two sequential steps, AdoMet formation and the subsequent tripolyphosphate hydrolysis which occurs prior to release of AdoMet from the enzyme. This Stenotrophomonas maltophilia (strain R551-3) protein is S-adenosylmethionine synthase.